Consider the following 435-residue polypeptide: MIDQNLLRTNLDDVANALKVKRGFTLDVESVKALEEKRKALQVKTETLQAERNARSKNIGAAKARGEDISALLAEVDNMGNELNEAKVALDQVQAEIRELLLSVPNLPADEVPLGKDDTENLEVSRWGEPRQFDFEVKDHVALGEALNGLDFAAGVKLTASRFVVMKGKLARLHRALSQFMLDLHTEQHGYVETNVPFLVNHDTLFGTGQLPKFGEDLFHTQPLTGQDPNETQRPFSLIPTAEVPVTNLVRDEIIDENSLPLRYTAHTPCFRSEAGSYGRDTRGLIRMHQFEKVEMVQIVAPEKSMEALEELTGHAEKVLQLLGLPYRKVLLCTGDMGFGSAKTYDLEVWLPAQNTYREISSCSNMWDFQARRMSARCKAKGDKKTRLVHTLNGSGLAVGRTLVAVLENYQNADGSITVPEVLRPYMGGVEVITA.

Residue 241-243 (TAE) participates in L-serine binding. Residue 272 to 274 (RSE) coordinates ATP. Glu-295 contributes to the L-serine binding site. ATP is bound at residue 359–362 (EISS). Position 395 (Ser-395) interacts with L-serine.

This sequence belongs to the class-II aminoacyl-tRNA synthetase family. Type-1 seryl-tRNA synthetase subfamily. Homodimer. The tRNA molecule binds across the dimer.

The protein resides in the cytoplasm. It carries out the reaction tRNA(Ser) + L-serine + ATP = L-seryl-tRNA(Ser) + AMP + diphosphate + H(+). It catalyses the reaction tRNA(Sec) + L-serine + ATP = L-seryl-tRNA(Sec) + AMP + diphosphate + H(+). It participates in aminoacyl-tRNA biosynthesis; selenocysteinyl-tRNA(Sec) biosynthesis; L-seryl-tRNA(Sec) from L-serine and tRNA(Sec): step 1/1. In terms of biological role, catalyzes the attachment of serine to tRNA(Ser). Is also able to aminoacylate tRNA(Sec) with serine, to form the misacylated tRNA L-seryl-tRNA(Sec), which will be further converted into selenocysteinyl-tRNA(Sec). This Actinobacillus pleuropneumoniae serotype 5b (strain L20) protein is Serine--tRNA ligase.